The chain runs to 391 residues: NAD(P)H-quinone oxidoreductase subunit H, chloroplastic (391 aa).

It belongs to the complex I 49 kDa subunit family. As to quaternary structure, NDH is composed of at least 16 different subunits, 5 of which are encoded in the nucleus.

Its subcellular location is the plastid. The protein localises to the chloroplast thylakoid membrane. It carries out the reaction a plastoquinone + NADH + (n+1) H(+)(in) = a plastoquinol + NAD(+) + n H(+)(out). The enzyme catalyses a plastoquinone + NADPH + (n+1) H(+)(in) = a plastoquinol + NADP(+) + n H(+)(out). In terms of biological role, NDH shuttles electrons from NAD(P)H:plastoquinone, via FMN and iron-sulfur (Fe-S) centers, to quinones in the photosynthetic chain and possibly in a chloroplast respiratory chain. The immediate electron acceptor for the enzyme in this species is believed to be plastoquinone. Couples the redox reaction to proton translocation, and thus conserves the redox energy in a proton gradient. This chain is NAD(P)H-quinone oxidoreductase subunit H, chloroplastic, found in Mesostigma viride (Green alga).